Here is a 261-residue protein sequence, read N- to C-terminus: tRNA 5-carboxymethoxyuridine methyltransferase (261 aa).

S-adenosyl-L-methionine is bound by residues arginine 26, 52–53 (GG), aspartate 73, 102–103 (AQ), and histidine 119.

Belongs to the class I-like SAM-binding methyltransferase superfamily. CmoM family.

It catalyses the reaction 5-carboxymethoxyuridine(34) in tRNA + S-adenosyl-L-methionine = 5-methoxycarbonylmethoxyuridine(34) in tRNA + S-adenosyl-L-homocysteine. Its function is as follows. Catalyzes the methylation of 5-carboxymethoxyuridine (cmo5U) to form 5-methoxycarbonylmethoxyuridine (mcmo5U) at position 34 in tRNAs. Four tRNAs (tRNA(Ala1), tRNA(Ser1), tRNA(Pro3) and tRNA(Thr4)) are fully modified with mcmo5U in stationary-phase E.coli. Also present at low frequency in tRNA(Leu3) and tRNA(Val1). This Escherichia coli (strain K12) protein is tRNA 5-carboxymethoxyuridine methyltransferase.